The primary structure comprises 315 residues: Methionyl-tRNA formyltransferase (315 aa).

113–116 (SLLP) serves as a coordination point for (6S)-5,6,7,8-tetrahydrofolate.

The protein belongs to the Fmt family.

The enzyme catalyses L-methionyl-tRNA(fMet) + (6R)-10-formyltetrahydrofolate = N-formyl-L-methionyl-tRNA(fMet) + (6S)-5,6,7,8-tetrahydrofolate + H(+). Its function is as follows. Attaches a formyl group to the free amino group of methionyl-tRNA(fMet). The formyl group appears to play a dual role in the initiator identity of N-formylmethionyl-tRNA by promoting its recognition by IF2 and preventing the misappropriation of this tRNA by the elongation apparatus. The sequence is that of Methionyl-tRNA formyltransferase from Escherichia coli (strain SE11).